Reading from the N-terminus, the 67-residue chain is Disintegrin EC3A (67 aa).

The 65-residue stretch at 1–65 (NSVHPCCDPV…DCPRNRYKGK (65 aa)) folds into the Disintegrin domain. 4 disulfide bridges follow: Cys-6-Cys-29, Cys-20-Cys-26, Cys-25-Cys-50, and Cys-38-Cys-57. The short motif at 42–44 (VGD) is the Cell attachment site; atypical (VGD) element.

Belongs to the venom metalloproteinase (M12B) family. P-II subfamily. P-IIe sub-subfamily. As to quaternary structure, heterodimer with EC3B; disulfide-linked. As to expression, expressed by the venom gland.

Its subcellular location is the secreted. Inhibits adhesion of cells expressing alpha-4/beta-1 (ITGA4/ITGB1) and alpha-4/beta-7 (ITGA4/ITGB7) integrins to the natural ligands vascular cell adhesion molecule 1 (VCAM-1) and mucosal addressin cell adhesion molecule 1 (MADCAM-1). It is also a weaker inhibitor of alpha-5/beta-1 (ITGA5/ITGB1) and alpha-2b/beta-3 (ITGA2B/ITGB3) integrins. The inhibitory activity of EC3 towards alpha-4 integrins is associated with the MLD sequence of EC3B subunit. The ability of EC3 to inhibit ITGA5/ITGB1 resides in both subunits A and B. The chain is Disintegrin EC3A from Echis carinatus (Saw-scaled viper).